A 239-amino-acid polypeptide reads, in one-letter code: Transcriptional regulatory protein RstA (239 aa).

The Response regulatory domain occupies 3-116 (TIVFVEDDAE…VLLARLRLHL (114 aa)). Asp52 bears the 4-aspartylphosphate mark. A DNA-binding region (ompR/PhoB-type) is located at residues 136–235 (YKALHFGTLT…VRNKGYLFAP (100 aa)).

Post-translationally, phosphorylated by RstB.

The protein resides in the cytoplasm. Functionally, member of the two-component regulatory system RstB/RstA. The protein is Transcriptional regulatory protein RstA (rstA) of Escherichia coli (strain K12).